Here is a 651-residue protein sequence, read N- to C-terminus: PTS system sucrose-specific EIIBCA component (651 aa).

The region spanning 3–86 (HQEVADRVLN…IVKTGLKEVT (84 aa)) is the PTS EIIB type-1 domain. Residue C25 is the Phosphocysteine intermediate; for EIIB activity of the active site. Transmembrane regions (helical) follow at residues 109 to 129 (VLSD…LLMA), 158 to 178 (MINA…GFSA), 182 to 202 (FGGN…PSLV), 204 to 224 (GYSV…VFGL), 226 to 246 (VAQA…FILA), 264 to 284 (FTPM…VGPV), 303 to 323 (TGWI…ITGL), 345 to 365 (FIFP…LAIF), 404 to 424 (FVFA…FHVL), and 444 to 464 (IPAF…PTFI). The region spanning 121–481 (LVAGGLLMAL…DDRDQVKSPA (361 aa)) is the PTS EIIC type-1 domain. One can recognise a PTS EIIA type-1 domain in the interval 510 to 614 (DQVFSAEIMG…DPTVMLIVTN (105 aa)). The active-site Tele-phosphohistidine intermediate; for EIIA activity is H562.

It localises to the cell membrane. It catalyses the reaction N(pros)-phospho-L-histidyl-[protein](out) + sucrose = sucrose 6(G)-phosphate(in) + L-histidyl-[protein]. Functionally, the phosphoenolpyruvate-dependent sugar phosphotransferase system (sugar PTS), a major carbohydrate active transport system, catalyzes the phosphorylation of incoming sugar substrates concomitantly with their translocation across the cell membrane. This system is involved in sucrose transport. The protein is PTS system sucrose-specific EIIBCA component (scrA) of Pediococcus pentosaceus.